Reading from the N-terminus, the 96-residue chain is Protein RnfH (96 aa).

This sequence belongs to the UPF0125 (RnfH) family.

The polypeptide is Protein RnfH (Psychromonas ingrahamii (strain DSM 17664 / CCUG 51855 / 37)).